The chain runs to 792 residues: Leucine--tRNA ligase (792 aa).

A 'HIGH' region motif is present at residues 39–50 (PYPSAAGLHLGH). Residues 569–573 (KMSKS) carry the 'KMSKS' region motif. Lys-572 provides a ligand contact to ATP.

It belongs to the class-I aminoacyl-tRNA synthetase family.

It is found in the cytoplasm. The enzyme catalyses tRNA(Leu) + L-leucine + ATP = L-leucyl-tRNA(Leu) + AMP + diphosphate. The protein is Leucine--tRNA ligase of Mycoplasma genitalium (strain ATCC 33530 / DSM 19775 / NCTC 10195 / G37) (Mycoplasmoides genitalium).